The sequence spans 427 residues: Stemphyloxin II biosynthesis cluster transcription factor sthR (427 aa).

Positions 15 to 45 (CDRCRKQKLRCPPDKDDMGTCGRCLRAGVAC) form a DNA-binding region, zn(2)-C6 fungal-type. The tract at residues 51–70 (KPRGRSQKHGISTDGTSHVS) is disordered. A compositionally biased stretch (polar residues) spans 59–69 (HGISTDGTSHV).

The protein resides in the nucleus. Transcription factor that regulates the expression of the gene cluster that mediates the biosynthesis of the phytotoxin stemphyloxin II. The chain is Stemphyloxin II biosynthesis cluster transcription factor sthR from Phaeosphaeria nodorum (strain SN15 / ATCC MYA-4574 / FGSC 10173) (Glume blotch fungus).